We begin with the raw amino-acid sequence, 345 residues long: Proto-oncogene serine/threonine-protein kinase mos (345 aa).

In terms of domain architecture, Protein kinase spans 63–344 (VCLLQRLGAG…LDLRALQAEL (282 aa)). ATP is bound by residues 69 to 77 (LGAGGFGSV) and K90. D202 functions as the Proton acceptor in the catalytic mechanism.

This sequence belongs to the protein kinase superfamily. Ser/Thr protein kinase family. As to quaternary structure, interacts with MAP2K1/MEK1. In terms of tissue distribution, restricted to gonadal tissues.

It is found in the cytoplasm. The catalysed reaction is L-seryl-[protein] + ATP = O-phospho-L-seryl-[protein] + ADP + H(+). It catalyses the reaction L-threonyl-[protein] + ATP = O-phospho-L-threonyl-[protein] + ADP + H(+). Its function is as follows. Serine/threonine kinase involved in the regulation of MAPK signaling. Is an activator of the ERK1/2 signaling cascade playing an essential role in the stimulation of oocyte maturation. The polypeptide is Proto-oncogene serine/threonine-protein kinase mos (Sus scrofa (Pig)).